The sequence spans 259 residues: Chaplin-C (259 aa).

The signal sequence occupies residues 1 to 28; sequence MRQATRKGLMTMAAATGVIAAAGGAAHA. In terms of domain architecture, Chaplin 1 spans 39 to 79; that stretch reads SPGVLSGNTVQAPVHVPVNVCGNTVDVVGVLNPAMGNACAN. Residues 84–112 are compositionally biased toward gly residues; it reads ASGGHGGHGGHGGYGDSGGEGGSHGGSHA. 2 disordered regions span residues 84–129 and 154–227; these read ASGG…NHVE and GNDC…ALAE. In terms of domain architecture, Chaplin 2 spans 119 to 159; that stretch reads SPGVGSGNHVEVPIDVPVNVCGNSIDVVGALNPTTGNDCGN. Low complexity predominate over residues 180–189; it reads HNPGNPGNPD. An LPXTG sorting signal motif is present at residues 225–229; the sequence is LAETG. Threonine 228 carries the pentaglycyl murein peptidoglycan amidated threonine modification. The propeptide at 229–259 is removed by sortase; that stretch reads GSDLPLGLALPVGAGALLAGTVLYRKARASV.

It belongs to the chaplin family. Long chaplin subfamily.

It localises to the secreted. It is found in the cell wall. Its function is as follows. One of 8 partially redundant surface-active proteins required for efficient formation of aerial mycelium; the short chaplins assemble into a hydrophobic, amyloidal fibrillar surface layer that envelopes and protects aerial hyphae and spores, presumably anchored to the long chaplins. Chaplins have an overlapping function with the surface-active SapB peptide; chaplins are essential on minimal medium while on rich medium both chaplins and SapB are required for efficient aerial hyphae formation. A minimal chaplin strain capable of forming aerial mycelium/hyphae on minimal medium contains ChpC, ChpE and ChpH. The strain also has restored rodlet formation on the hyphae surface. The long chaplins (ChpA, ChpB, ChpC) are not absolutely necessary for short chaplin localization or rodlet formation, but probably play a role in initiating aerial hyphae development. Chaplins are also involved in cell attachment to a hydrophobic surface. The chain is Chaplin-C from Streptomyces coelicolor (strain ATCC BAA-471 / A3(2) / M145).